The following is a 669-amino-acid chain: DNA ligase (669 aa).

NAD(+) contacts are provided by residues 34-38 (DAEYD), 83-84 (SL), and glutamate 114. Lysine 116 acts as the N6-AMP-lysine intermediate in catalysis. NAD(+)-binding residues include arginine 137, glutamate 171, lysine 287, and lysine 311. Positions 405, 408, 423, and 428 each coordinate Zn(2+). A BRCT domain is found at 591–669 (NVESYFAGKT…EERFLQELNK (79 aa)).

This sequence belongs to the NAD-dependent DNA ligase family. LigA subfamily. The cofactor is Mg(2+). Mn(2+) serves as cofactor.

It catalyses the reaction NAD(+) + (deoxyribonucleotide)n-3'-hydroxyl + 5'-phospho-(deoxyribonucleotide)m = (deoxyribonucleotide)n+m + AMP + beta-nicotinamide D-nucleotide.. DNA ligase that catalyzes the formation of phosphodiester linkages between 5'-phosphoryl and 3'-hydroxyl groups in double-stranded DNA using NAD as a coenzyme and as the energy source for the reaction. It is essential for DNA replication and repair of damaged DNA. The protein is DNA ligase of Bacillus cereus (strain G9842).